Consider the following 158-residue polypeptide: Small ribosomal subunit protein eS10 (158 aa).

A disordered region spans residues 99–158 (ETVRRGAVGRPDAPARSAEDRSAYRRAPTTPAAHDKKADVGPGSADLEFRGGFGRGRPAP). Residues 149-158 (GGFGRGRPAP) are compositionally biased toward gly residues.

This sequence belongs to the eukaryotic ribosomal protein eS10 family.

The protein localises to the cytoplasm. The protein is Small ribosomal subunit protein eS10 (RpS10) of Spodoptera frugiperda (Fall armyworm).